We begin with the raw amino-acid sequence, 64 residues long: Conotoxin Im11.2 (64 aa).

The N-terminal stretch at 1-26 (MMFRLTSVSCFLLVIVCLNLVVLTNA) is a signal peptide. 4 disulfide bridges follow: C27–C41, C34–C46, C40–C50, and C45–C54. D57 bears the Aspartic acid 1-amide mark. A propeptide spanning residues 61–64 (ATFQ) is cleaved from the precursor.

It belongs to the conotoxin I2 superfamily. Expressed by the venom duct.

The protein resides in the secreted. The sequence is that of Conotoxin Im11.2 from Conus imperialis (Imperial cone).